Consider the following 157-residue polypeptide: S-ribosylhomocysteine lyase (157 aa).

Histidine 54, histidine 58, and cysteine 124 together coordinate Fe cation.

Belongs to the LuxS family. In terms of assembly, homodimer. It depends on Fe cation as a cofactor.

It catalyses the reaction S-(5-deoxy-D-ribos-5-yl)-L-homocysteine = (S)-4,5-dihydroxypentane-2,3-dione + L-homocysteine. Its function is as follows. Involved in the synthesis of autoinducer 2 (AI-2) which is secreted by bacteria and is used to communicate both the cell density and the metabolic potential of the environment. The regulation of gene expression in response to changes in cell density is called quorum sensing. Catalyzes the transformation of S-ribosylhomocysteine (RHC) to homocysteine (HC) and 4,5-dihydroxy-2,3-pentadione (DPD). The sequence is that of S-ribosylhomocysteine lyase from Levilactobacillus brevis (strain ATCC 367 / BCRC 12310 / CIP 105137 / JCM 1170 / LMG 11437 / NCIMB 947 / NCTC 947) (Lactobacillus brevis).